The chain runs to 64 residues: Small ribosomal subunit protein bS21 (64 aa).

It belongs to the bacterial ribosomal protein bS21 family.

In Pelagibacter ubique (strain HTCC1062), this protein is Small ribosomal subunit protein bS21.